We begin with the raw amino-acid sequence, 36 residues long: RYCPRNPEACYNYCLRTGRPGGYCGGRSRITCFCFR.

3 disulfide bridges follow: Cys3-Cys24, Cys10-Cys32, and Cys14-Cys34.

It belongs to the invertebrate defensin family. Expressed by the venom gland.

It is found in the secreted. Antibacterial peptide mostly active against Gram-positive bacteria. This Tityus discrepans (Venezuelan scorpion) protein is Tddefensin.